Reading from the N-terminus, the 161-residue chain is MSEASRVCSGYYSLNHSFVEPFQCPRRGEGATLLYCCGFADLKYCCSEPGSYFPYKHSYMWSLSIGALIGLGIAALVLLAFVISVCVLCYLFLYTKPQRLDTGLKLQHLEAVSTQEGNSNRKSKAPRSNAASNSTNETFYEADDIIQEKTMDTTQINTAYC.

The helical transmembrane segment at 65–85 (IGALIGLGIAALVLLAFVISV) threads the bilayer. The disordered stretch occupies residues 115-134 (QEGNSNRKSKAPRSNAASNS).

It belongs to the shisa family.

It is found in the membrane. This chain is Protein shisa-like-2B (SHISAL2B), found in Bos taurus (Bovine).